A 766-amino-acid chain; its full sequence is Protein transport protein Sec23B (766 aa).

Position 2 is an N-acetylalanine (alanine 2). Residues cysteine 61, cysteine 66, cysteine 85, and cysteine 88 each contribute to the Zn(2+) site. N6-acetyllysine is present on lysine 564. The Gelsolin-like repeat unit spans residues 633 to 719; the sequence is PEPVLLDSSS…EHGGSQARFL (87 aa).

The protein belongs to the SEC23/SEC24 family. SEC23 subfamily. COPII is composed of at least five proteins: the Sec23/24 complex, the Sec13/31 complex and Sar1. Interacts with SAR1A.

It is found in the cytoplasmic vesicle. Its subcellular location is the COPII-coated vesicle membrane. The protein resides in the endoplasmic reticulum membrane. The protein localises to the cytoplasm. It localises to the cytosol. Its function is as follows. Component of the coat protein complex II (COPII) which promotes the formation of transport vesicles from the endoplasmic reticulum (ER). The coat has two main functions, the physical deformation of the endoplasmic reticulum membrane into vesicles and the selection of cargo molecules for their transport to the Golgi complex. The chain is Protein transport protein Sec23B from Pongo abelii (Sumatran orangutan).